The chain runs to 583 residues: Aspartate--tRNA(Asp/Asn) ligase (583 aa).

Glu172 provides a ligand contact to L-aspartate. The tract at residues 196–199 (QMLK) is aspartate. Arg218 contacts L-aspartate. ATP-binding positions include 218-220 (RDE) and Gln227. His446 serves as a coordination point for L-aspartate. Glu480 contacts ATP. Arg487 serves as a coordination point for L-aspartate. An ATP-binding site is contributed by 532-535 (GLDR).

Belongs to the class-II aminoacyl-tRNA synthetase family. Type 1 subfamily. Homodimer.

The protein resides in the cytoplasm. The catalysed reaction is tRNA(Asx) + L-aspartate + ATP = L-aspartyl-tRNA(Asx) + AMP + diphosphate. Functionally, aspartyl-tRNA synthetase with relaxed tRNA specificity since it is able to aspartylate not only its cognate tRNA(Asp) but also tRNA(Asn). Reaction proceeds in two steps: L-aspartate is first activated by ATP to form Asp-AMP and then transferred to the acceptor end of tRNA(Asp/Asn). This Streptococcus mutans serotype c (strain ATCC 700610 / UA159) protein is Aspartate--tRNA(Asp/Asn) ligase.